Reading from the N-terminus, the 467-residue chain is Serine/threonine-protein kinase AFC1 (467 aa).

The region spanning 115–443 (YQILSKMGEG…AREALNHPFF (329 aa)) is the Protein kinase domain. Residues 121-129 (MGEGTFGQV) and K144 contribute to the ATP site. D240 acts as the Proton acceptor in catalysis. The interval 447 to 467 (REQSIPPFNPNPHPFLYNQKN) is disordered.

This sequence belongs to the protein kinase superfamily. CMGC Ser/Thr protein kinase family. Lammer subfamily.

The catalysed reaction is L-seryl-[protein] + ATP = O-phospho-L-seryl-[protein] + ADP + H(+). The enzyme catalyses L-threonyl-[protein] + ATP = O-phospho-L-threonyl-[protein] + ADP + H(+). It catalyses the reaction L-tyrosyl-[protein] + ATP = O-phospho-L-tyrosyl-[protein] + ADP + H(+). Activator of yeast transcription factor, STE12. This is Serine/threonine-protein kinase AFC1 (AFC1) from Arabidopsis thaliana (Mouse-ear cress).